The chain runs to 439 residues: 3-phosphoshikimate 1-carboxyvinyltransferase (439 aa).

Residues Lys27, Ser28, and Arg32 each contribute to the 3-phosphoshikimate site. Lys27 is a binding site for phosphoenolpyruvate. Gly101 and Arg130 together coordinate phosphoenolpyruvate. Ser175, Gln177, Asp326, and Lys353 together coordinate 3-phosphoshikimate. Gln177 serves as a coordination point for phosphoenolpyruvate. The active-site Proton acceptor is Asp326. Phosphoenolpyruvate-binding residues include Arg357 and Arg399.

This sequence belongs to the EPSP synthase family. Monomer.

The protein resides in the cytoplasm. The enzyme catalyses 3-phosphoshikimate + phosphoenolpyruvate = 5-O-(1-carboxyvinyl)-3-phosphoshikimate + phosphate. It participates in metabolic intermediate biosynthesis; chorismate biosynthesis; chorismate from D-erythrose 4-phosphate and phosphoenolpyruvate: step 6/7. In terms of biological role, catalyzes the transfer of the enolpyruvyl moiety of phosphoenolpyruvate (PEP) to the 5-hydroxyl of shikimate-3-phosphate (S3P) to produce enolpyruvyl shikimate-3-phosphate and inorganic phosphate. This chain is 3-phosphoshikimate 1-carboxyvinyltransferase, found in Synechococcus sp. (strain WH7803).